Reading from the N-terminus, the 341-residue chain is Short chain dehydrogenase FGM9 (341 aa).

The NADP(+) site is built by Leu38, Lys63, Asp88, and Asn114. Catalysis depends on proton donor residues Ser167 and Tyr200. 2 residues coordinate NADP(+): Tyr200 and Lys204. Catalysis depends on Lys204, which acts as the Lowers pKa of active site Tyr.

This sequence belongs to the short-chain dehydrogenases/reductases (SDR) family.

It participates in secondary metabolite biosynthesis. Short chain dehydrogenase; part of the Fg3_54/C64 gene cluster that mediates the biosynthesis of the octapeptide fusaoctaxin A, a virulence factor that is required for cell-to-cell invasiveness of plant host. The 2 nonribosomal peptide synthetases NRPS9 and NRPS5 form an assembly line which likely utilizes GABA as a starter unit (loaded on the unique module M1 of NRPS9) and sequentially incorporates seven extender units composed of the residues L-Ala, L-allo-Ile, L-Ser, L-Val, L-Ser, L-Leu and L-Leu, respectively. During the process, each of the residues that are tethered on modules M3-M7 of NRPS5 containing an E domain can undergo an epimerization reaction to produce a D-configuration before the transpeptidation reaction occurs. The elongation of the peptidyl chain might be terminated by module M8-mediated L-Leu incorporation, followed by R domain-catalyzed 4 electron reduction to release the resulting octapeptide from the assembly line as an alcohol. Fusaoctaxin A is cleaved by the cluster specific ABC transporter FGM5 to the pentapeptide fusapentaxin A and the tripeptide fusatrixin A. The other enzymes from the cluster, FGM1, FGM2, FGM3 and FGM9 seem not to be involved in the biosynthesis of fusaoctaxin A and their functions have still to be determined. The protein is Short chain dehydrogenase FGM9 of Gibberella zeae (strain ATCC MYA-4620 / CBS 123657 / FGSC 9075 / NRRL 31084 / PH-1) (Wheat head blight fungus).